Here is a 164-residue protein sequence, read N- to C-terminus: Endoribonuclease YbeY (164 aa).

Zn(2+)-binding residues include His111, His115, and His121. The segment at 142–164 (GYPDPYADDETETSPTVTTKDSE) is disordered. The span at 154–164 (TSPTVTTKDSE) shows a compositional bias: polar residues.

Belongs to the endoribonuclease YbeY family. The cofactor is Zn(2+).

It localises to the cytoplasm. Functionally, single strand-specific metallo-endoribonuclease involved in late-stage 70S ribosome quality control and in maturation of the 3' terminus of the 16S rRNA. This is Endoribonuclease YbeY from Pseudomonas fluorescens (strain Pf0-1).